A 401-amino-acid polypeptide reads, in one-letter code: 4-hydroxy-3-methylbut-2-en-1-yl diphosphate synthase (ferredoxin) (401 aa).

The [4Fe-4S] cluster site is built by Cys306, Cys309, Cys340, and Glu347.

Belongs to the IspG family. [4Fe-4S] cluster is required as a cofactor.

It carries out the reaction (2E)-4-hydroxy-3-methylbut-2-enyl diphosphate + 2 oxidized [2Fe-2S]-[ferredoxin] + H2O = 2-C-methyl-D-erythritol 2,4-cyclic diphosphate + 2 reduced [2Fe-2S]-[ferredoxin] + H(+). It functions in the pathway isoprenoid biosynthesis; isopentenyl diphosphate biosynthesis via DXP pathway; isopentenyl diphosphate from 1-deoxy-D-xylulose 5-phosphate: step 5/6. Converts 2C-methyl-D-erythritol 2,4-cyclodiphosphate (ME-2,4cPP) into 1-hydroxy-2-methyl-2-(E)-butenyl 4-diphosphate. This chain is 4-hydroxy-3-methylbut-2-en-1-yl diphosphate synthase (ferredoxin), found in Synechococcus sp. (strain CC9902).